Consider the following 117-residue polypeptide: Protein Aeq5-like2 (117 aa).

At Met1 to Arg36 the chain is on the cytoplasmic side. A helical transmembrane segment spans residues Thr37–Gly56. Topologically, residues Ser57–Ser117 are extracellular. Disulfide bonds link Cys59–Cys94, Cys63–Cys90, Cys70–Cys83, and Cys74–Cys80.

The mature peptide may be cleaved at a dibasic residue site and be shorter than the sequence shown (possibly residues 1-94). As to expression, expressed in endodermal ganglion neurons, apparently bipolar and following mesentery folds (observed in both planulae and primary polyps). It not expressed in nematocytes.

The protein resides in the membrane. The protein is Protein Aeq5-like2 of Nematostella vectensis (Starlet sea anemone).